Here is a 279-residue protein sequence, read N- to C-terminus: 4-hydroxy-3-methylbut-2-enyl diphosphate reductase (279 aa).

A [4Fe-4S] cluster-binding site is contributed by Cys12. Residues His36 and His70 each contribute to the (2E)-4-hydroxy-3-methylbut-2-enyl diphosphate site. Residues His36 and His70 each contribute to the dimethylallyl diphosphate site. Isopentenyl diphosphate contacts are provided by His36 and His70. [4Fe-4S] cluster is bound at residue Cys92. His120 contacts (2E)-4-hydroxy-3-methylbut-2-enyl diphosphate. His120 contacts dimethylallyl diphosphate. An isopentenyl diphosphate-binding site is contributed by His120. Residue Glu122 is the Proton donor of the active site. Thr158 is a binding site for (2E)-4-hydroxy-3-methylbut-2-enyl diphosphate. Residue Cys186 coordinates [4Fe-4S] cluster. (2E)-4-hydroxy-3-methylbut-2-enyl diphosphate-binding residues include Ser214, Ser215, Asn216, and Ser258. Residues Ser214, Ser215, Asn216, and Ser258 each coordinate dimethylallyl diphosphate. Isopentenyl diphosphate-binding residues include Ser214, Ser215, Asn216, and Ser258.

This sequence belongs to the IspH family. Requires [4Fe-4S] cluster as cofactor.

The catalysed reaction is isopentenyl diphosphate + 2 oxidized [2Fe-2S]-[ferredoxin] + H2O = (2E)-4-hydroxy-3-methylbut-2-enyl diphosphate + 2 reduced [2Fe-2S]-[ferredoxin] + 2 H(+). The enzyme catalyses dimethylallyl diphosphate + 2 oxidized [2Fe-2S]-[ferredoxin] + H2O = (2E)-4-hydroxy-3-methylbut-2-enyl diphosphate + 2 reduced [2Fe-2S]-[ferredoxin] + 2 H(+). It functions in the pathway isoprenoid biosynthesis; dimethylallyl diphosphate biosynthesis; dimethylallyl diphosphate from (2E)-4-hydroxy-3-methylbutenyl diphosphate: step 1/1. The protein operates within isoprenoid biosynthesis; isopentenyl diphosphate biosynthesis via DXP pathway; isopentenyl diphosphate from 1-deoxy-D-xylulose 5-phosphate: step 6/6. Its function is as follows. Catalyzes the conversion of 1-hydroxy-2-methyl-2-(E)-butenyl 4-diphosphate (HMBPP) into a mixture of isopentenyl diphosphate (IPP) and dimethylallyl diphosphate (DMAPP). Acts in the terminal step of the DOXP/MEP pathway for isoprenoid precursor biosynthesis. The protein is 4-hydroxy-3-methylbut-2-enyl diphosphate reductase of Campylobacter fetus subsp. fetus (strain 82-40).